Here is a 79-residue protein sequence, read N- to C-terminus: Large ribosomal subunit protein uL24 (79 aa).

The protein belongs to the universal ribosomal protein uL24 family. Part of the 50S ribosomal subunit.

Functionally, one of two assembly initiator proteins, it binds directly to the 5'-end of the 23S rRNA, where it nucleates assembly of the 50S subunit. One of the proteins that surrounds the polypeptide exit tunnel on the outside of the subunit. This Lactobacillus gasseri (strain ATCC 33323 / DSM 20243 / BCRC 14619 / CIP 102991 / JCM 1131 / KCTC 3163 / NCIMB 11718 / NCTC 13722 / AM63) protein is Large ribosomal subunit protein uL24.